The following is a 64-amino-acid chain: Large ribosomal subunit protein bL35 (64 aa).

Positions 1 to 23 (MPKMKTHRGAAKRFKKTKNKIKR) are disordered.

This sequence belongs to the bacterial ribosomal protein bL35 family.

This Nitratiruptor sp. (strain SB155-2) protein is Large ribosomal subunit protein bL35.